Here is a 214-residue protein sequence, read N- to C-terminus: Putative glucose-6-phosphate isomerase 1 (214 aa).

Fe cation-binding residues include histidine 92, histidine 94, glutamate 101, and histidine 140.

Belongs to the archaeal-type GPI family. Homodimer. The cofactor is Fe cation.

It is found in the cytoplasm. The catalysed reaction is alpha-D-glucose 6-phosphate = beta-D-fructose 6-phosphate. It participates in carbohydrate degradation; glycolysis; D-glyceraldehyde 3-phosphate and glycerone phosphate from D-glucose: step 2/4. This is Putative glucose-6-phosphate isomerase 1 (pgiA1) from Rhizobium meliloti (strain 1021) (Ensifer meliloti).